The chain runs to 278 residues: MQVHERSHTGGHTCQCNHGSEKKAPATGKVHSEGGSARMSLLILVSIFLCAASIMFLVYKHFPQLSEEEREKIKVPRDMDDAKALGKVLSKYKDTFYVEVLVAYFTTYIFLQTFAIPGSIFLSILSGFLYPFPLALFLVCLCSGLGASFSYLLSYLVGRPVVYKYLSDKAIKWSQQVERHRDHLINYIIFLRITPFLPNWFINITSPVINVPLKVFFLGTFIGVAPPSFVAIKAGTTLYQLTTAGEAVSWNSVIILMVLAVLSILPAIFQKKLKKKFE.

Residues 1–31 (MQVHERSHTGGHTCQCNHGSEKKAPATGKVH) are disordered. 6 helical membrane passes run 39–59 (MSLL…FLVY), 96–116 (FYVE…TFAI), 132–154 (FPLA…YLLS), 184–204 (LINY…FINI), 212–232 (PLKV…FVAI), and 249–269 (SWNS…PAIF). The interval 127-238 (GFLYPFPLAL…FVAIKAGTTL (112 aa)) is VTT domain; required for its function in autophagy.

The protein belongs to the TMEM41 family.

Its subcellular location is the endoplasmic reticulum membrane. The protein localises to the endomembrane system. It carries out the reaction a 1,2-diacyl-sn-glycero-3-phospho-L-serine(in) = a 1,2-diacyl-sn-glycero-3-phospho-L-serine(out). The enzyme catalyses cholesterol(in) = cholesterol(out). It catalyses the reaction a 1,2-diacyl-sn-glycero-3-phosphocholine(in) = a 1,2-diacyl-sn-glycero-3-phosphocholine(out). The catalysed reaction is a 1,2-diacyl-sn-glycero-3-phosphoethanolamine(in) = a 1,2-diacyl-sn-glycero-3-phosphoethanolamine(out). Its function is as follows. Phospholipid scramblase involved in lipid homeostasis and membrane dynamics processes. Has phospholipid scramblase activity toward cholesterol and phosphatidylserine, as well as phosphatidylethanolamine and phosphatidylcholine. Required for autophagosome formation: participates in early stages of autophagosome biogenesis at the endoplasmic reticulum (ER) membrane by reequilibrating the leaflets of the ER as lipids are extracted by atg2 (atg2a or atg2b) to mediate autophagosome assembly. In addition to autophagy, involved in other processes in which phospholipid scramblase activity is required. Required for normal motor neuron development. This Xenopus tropicalis (Western clawed frog) protein is Transmembrane protein 41B.